A 183-amino-acid chain; its full sequence is A-type ATP synthase subunit E (183 aa).

The protein belongs to the V-ATPase E subunit family. In terms of assembly, has multiple subunits, A(3), B(3), C, D, E, F, G, I and K(x); there may be a few other subunits as well.

The protein resides in the cell membrane. Component of the A-type ATP synthase that produces ATP from ADP in the presence of a proton gradient across the membrane. This is A-type ATP synthase subunit E from Methanosarcina mazei (strain ATCC BAA-159 / DSM 3647 / Goe1 / Go1 / JCM 11833 / OCM 88) (Methanosarcina frisia).